Consider the following 516-residue polypeptide: Lysophosphatidylcholine acyltransferase 2B (516 aa).

N-linked (GlcNAc...) asparagine glycosylation occurs at Asn28. The next 3 membrane-spanning stretches (helical) occupy residues Thr44–Val64, Cys68–Pro88, and Leu102–Val122. Residues His142–Asp147 carry the HXXXXD motif motif. EF-hand domains are found at residues Pro387 to Pro422 and Asn424 to Val459. Ca(2+) is bound by residues Asp400, Asn402, Asp404, Thr406, Glu411, Asp437, Asp439, Asp441, Tyr443, and Glu448.

The protein belongs to the 1-acyl-sn-glycerol-3-phosphate acyltransferase family.

It localises to the membrane. The protein operates within lipid metabolism; phospholipid metabolism. Probable acetyltransferase. This chain is Lysophosphatidylcholine acyltransferase 2B (Lpcat2b), found in Mus musculus (Mouse).